Here is a 64-residue protein sequence, read N- to C-terminus: MPKMKSHRGACKRFKATASGKVKRERMNGSHNLEHKNRKRTRRLHQSTLVDSTKEKQIKRMILA.

The interval 19-41 (SGKVKRERMNGSHNLEHKNRKRT) is disordered. Over residues 25-35 (ERMNGSHNLEH) the composition is skewed to basic and acidic residues.

It belongs to the bacterial ribosomal protein bL35 family.

The polypeptide is Large ribosomal subunit protein bL35 (Chlorobaculum tepidum (strain ATCC 49652 / DSM 12025 / NBRC 103806 / TLS) (Chlorobium tepidum)).